We begin with the raw amino-acid sequence, 1075 residues long: DNA-directed RNA polymerase subunit beta (1075 aa).

It belongs to the RNA polymerase beta chain family. As to quaternary structure, in plastids the minimal PEP RNA polymerase catalytic core is composed of four subunits: alpha, beta, beta', and beta''. When a (nuclear-encoded) sigma factor is associated with the core the holoenzyme is formed, which can initiate transcription.

Its subcellular location is the plastid. It localises to the chloroplast. The catalysed reaction is RNA(n) + a ribonucleoside 5'-triphosphate = RNA(n+1) + diphosphate. DNA-dependent RNA polymerase catalyzes the transcription of DNA into RNA using the four ribonucleoside triphosphates as substrates. The sequence is that of DNA-directed RNA polymerase subunit beta from Oryza sativa (Rice).